The primary structure comprises 416 residues: UPF0761 membrane protein Mpe_A1422 (416 aa).

The next 6 helical transmembrane spans lie at 63-83 (IALVPLATVTLAIFSAFPMFG), 120-140 (LGTVGLVVLVLTALALMLTID), 159-179 (VLVYWAAATLGPLLLGVSLTL), 198-218 (LSVLLNALEFGLLAAAMAGLF), 234-256 (GGLFVSAGFELAKKGLAWYLAQV), and 271-291 (IFLIWLYLGWVIVLLGAVIAA).

Belongs to the UPF0761 family.

It is found in the cell inner membrane. This Methylibium petroleiphilum (strain ATCC BAA-1232 / LMG 22953 / PM1) protein is UPF0761 membrane protein Mpe_A1422.